The sequence spans 965 residues: Aminopeptidase N (965 aa).

Residues 1–8 lie on the Cytoplasmic side of the membrane; it reads MAKGFYIS. Residues 9-32 form a helical; Signal-anchor for type II membrane protein membrane-spanning segment; the sequence is KALGILAILLGVAAVATIIALSVV. A cytosolic Ser/Thr-rich junction region spans residues 33–65; the sequence is YAQEKNKNAERGTAAPTSPTGPTTTSATTLDQS. Over 33 to 965 the chain is Extracellular; that stretch reads YAQEKNKNAE…VVLNWFKDHS (933 aa). Positions 40-65 are disordered; sequence NAERGTAAPTSPTGPTTTSATTLDQS. Low complexity predominate over residues 44–61; it reads GTAAPTSPTGPTTTSATT. Residues 66–965 form a metalloprotease region; that stretch reads KPWNRYRLPT…VVLNWFKDHS (900 aa). The N-linked (GlcNAc...) asparagine glycan is linked to Asn125. Tyr173 carries the post-translational modification Sulfotyrosine. N-linked (GlcNAc...) asparagine glycosylation is found at Asn231, Asn260, and Asn316. Position 349-353 (349-353) interacts with substrate; that stretch reads GAMEN. Position 385 (His385) interacts with Zn(2+). Glu386 acts as the Proton acceptor in catalysis. Residues His389 and Glu408 each contribute to the Zn(2+) site. Tyr416 is subject to Sulfotyrosine. N-linked (GlcNAc...) asparagine glycosylation is found at Asn508, Asn569, Asn624, Asn680, Asn734, and Asn738. Cystine bridges form between Cys760/Cys767 and Cys797/Cys833.

The protein belongs to the peptidase M1 family. Homodimer. Interacts with SLC6A19. Zn(2+) is required as a cofactor. In terms of processing, sulfated. N- and O-glycosylated. Post-translationally, may undergo proteolysis and give rise to a soluble form.

It is found in the cell membrane. The enzyme catalyses Release of an N-terminal amino acid, Xaa-|-Yaa- from a peptide, amide or arylamide. Xaa is preferably Ala, but may be most amino acids including Pro (slow action). When a terminal hydrophobic residue is followed by a prolyl residue, the two may be released as an intact Xaa-Pro dipeptide.. Its function is as follows. Broad specificity aminopeptidase which plays a role in the final digestion of peptides generated from hydrolysis of proteins by gastric and pancreatic proteases. Also involved in the processing of various peptides including peptide hormones, such as angiotensin III and IV, neuropeptides, and chemokines. May also be involved the cleavage of peptides bound to major histocompatibility complex class II molecules of antigen presenting cells. May have a role in angiogenesis and promote cholesterol crystallization. May have a role in amino acid transport by acting as binding partner of amino acid transporter SLC6A19 and regulating its activity. In Bos taurus (Bovine), this protein is Aminopeptidase N (ANPEP).